We begin with the raw amino-acid sequence, 684 residues long: Probable pectin methyltransferase QUA2 (684 aa).

The segment at 1 to 35 is disordered; sequence MSMPLQRGISGVRVSDSSDDLRDSQMKDKTERARS. The Cytoplasmic portion of the chain corresponds to 1 to 86; sequence MSMPLQRGIS…RHRLMLLFLK (86 aa). A compositionally biased stretch (basic and acidic residues) spans 19–35; that stretch reads DDLRDSQMKDKTERARS. The chain crosses the membrane as a helical; Signal-anchor for type II membrane protein span at residues 87-107; it reads ISLVLIVVIALAGSFWWTISI. At 108–684 the chain is on the lumenal side; it reads STSSRGHVYH…QKPFTKRQSI (577 aa). N-linked (GlcNAc...) asparagine glycosylation is found at asparagine 161 and asparagine 476.

The protein belongs to the methyltransferase superfamily. Ubiquitous.

It localises to the golgi apparatus membrane. It functions in the pathway glycan metabolism; pectin biosynthesis. Its function is as follows. May be involved in the synthesis of homogalacturonan. Required for normal cell adhesion and plant development. This Arabidopsis thaliana (Mouse-ear cress) protein is Probable pectin methyltransferase QUA2 (QUA2).